Here is a 127-residue protein sequence, read N- to C-terminus: Glycine cleavage system H protein (127 aa).

The region spanning 22–104 is the Lipoyl-binding domain; it reads KARIGITHFA…YEKAWMIVVE (83 aa). N6-lipoyllysine is present on Lys-63.

This sequence belongs to the GcvH family. As to quaternary structure, the glycine cleavage system is composed of four proteins: P, T, L and H. (R)-lipoate serves as cofactor.

In terms of biological role, the glycine cleavage system catalyzes the degradation of glycine. The H protein shuttles the methylamine group of glycine from the P protein to the T protein. Is also involved in protein lipoylation via its role as an octanoyl/lipoyl carrier protein intermediate. The polypeptide is Glycine cleavage system H protein (Bacillus velezensis (strain DSM 23117 / BGSC 10A6 / LMG 26770 / FZB42) (Bacillus amyloliquefaciens subsp. plantarum)).